The following is a 199-amino-acid chain: Holliday junction branch migration complex subunit RuvA (199 aa).

Residues 1–65 form a domain I region; it reads MIASLRGKLL…DRGQRLFGFG (65 aa). Residues 66–144 form a domain II region; it reads SKKDRESFEL…KFEMFLNEGT (79 aa). The flexible linker stretch occupies residues 145–155; sequence TESSFVDRETD. The segment at 155–199 is domain III; it reads DLATLALIQLGFDEKSATKQVADAKKLNPGLSASDIVKQVITGTR.

It belongs to the RuvA family. In terms of assembly, homotetramer. Forms an RuvA(8)-RuvB(12)-Holliday junction (HJ) complex. HJ DNA is sandwiched between 2 RuvA tetramers; dsDNA enters through RuvA and exits via RuvB. An RuvB hexamer assembles on each DNA strand where it exits the tetramer. Each RuvB hexamer is contacted by two RuvA subunits (via domain III) on 2 adjacent RuvB subunits; this complex drives branch migration. In the full resolvosome a probable DNA-RuvA(4)-RuvB(12)-RuvC(2) complex forms which resolves the HJ.

The protein localises to the cytoplasm. Functionally, the RuvA-RuvB-RuvC complex processes Holliday junction (HJ) DNA during genetic recombination and DNA repair, while the RuvA-RuvB complex plays an important role in the rescue of blocked DNA replication forks via replication fork reversal (RFR). RuvA specifically binds to HJ cruciform DNA, conferring on it an open structure. The RuvB hexamer acts as an ATP-dependent pump, pulling dsDNA into and through the RuvAB complex. HJ branch migration allows RuvC to scan DNA until it finds its consensus sequence, where it cleaves and resolves the cruciform DNA. The sequence is that of Holliday junction branch migration complex subunit RuvA from Leptospira biflexa serovar Patoc (strain Patoc 1 / Ames).